A 412-amino-acid chain; its full sequence is Pentatricopeptide repeat-containing protein At3g60980, mitochondrial (412 aa).

A mitochondrion-targeting transit peptide spans 1–18 (MSLIGRLNLGRRFCTAVP). PPR repeat units follow at residues 69–104 (TTTI…NLRP), 105–139 (NSHC…GQVH), 143–178 (SDDS…TTYP), 179–213 (DHVA…FLIA), 230–264 (VAFL…NRLL), 266–296 (CAET…LLDK), 305–339 (DSDT…NDYL), 344–371 (IITR…DFGY), and 373–407 (DVNT…TLKE).

It belongs to the PPR family. P subfamily.

It localises to the mitochondrion. The polypeptide is Pentatricopeptide repeat-containing protein At3g60980, mitochondrial (Arabidopsis thaliana (Mouse-ear cress)).